The chain runs to 567 residues: Thiol:disulfide interchange protein DsbD (567 aa).

The signal sequence occupies residues 1-19 (MAQRIFTLILLLCSTSAFA). Disulfide bonds link Cys122-Cys128 and Cys185-Cys307. Transmembrane regions (helical) follow at residues 170–192 (ALWA…MYPL), 212–234 (LAFI…VAAA), 246–268 (YVLI…LFTL), 297–319 (GAIA…LLYI), 326–348 (WLGG…LVTV), 358–380 (GPWM…VFLL), and 387–409 (AWGL…ITSL). Residues 435-567 (QDWAFGSPSA…FSAHLHDRQP (133 aa)) form the Thioredoxin domain. An intrachain disulfide couples Cys482 to Cys485.

This sequence belongs to the thioredoxin family. DsbD subfamily.

The protein resides in the cell inner membrane. It catalyses the reaction [protein]-dithiol + NAD(+) = [protein]-disulfide + NADH + H(+). It carries out the reaction [protein]-dithiol + NADP(+) = [protein]-disulfide + NADPH + H(+). Its function is as follows. Required to facilitate the formation of correct disulfide bonds in some periplasmic proteins and for the assembly of the periplasmic c-type cytochromes. Acts by transferring electrons from cytoplasmic thioredoxin to the periplasm. This transfer involves a cascade of disulfide bond formation and reduction steps. The sequence is that of Thiol:disulfide interchange protein DsbD from Salmonella typhi.